We begin with the raw amino-acid sequence, 235 residues long: Class B acid phosphatase (235 aa).

An N-terminal signal peptide occupies residues 1-22 (MKNLVKLSLIAMLTAATLPAMA). Catalysis depends on Asp-67, which acts as the Nucleophile. Mg(2+) is bound by residues Asp-67 and Asp-69. Asp-69 functions as the Proton donor in the catalytic mechanism. Substrate-binding positions include 135-136 (TG) and Lys-175. Asp-190 contacts Mg(2+).

It belongs to the class B bacterial acid phosphatase family. Homotetramer. Mg(2+) is required as a cofactor.

Its subcellular location is the periplasm. It carries out the reaction a phosphate monoester + H2O = an alcohol + phosphate. Its function is as follows. Dephosphorylates several organic phosphate monoesters. Also has a phosphotransferase activity catalyzing the transfer of low-energy phosphate groups from organic phosphate monoesters to free hydroxyl groups of various organic compounds. The polypeptide is Class B acid phosphatase (Aggregatibacter actinomycetemcomitans serotype C (strain D11S-1) (Actinobacillus actinomycetemcomitans)).